We begin with the raw amino-acid sequence, 215 residues long: Nascent polypeptide-associated complex subunit alpha (215 aa).

Positions 1–81 are disordered; the sequence is MPGEATETVP…SEKKARKAMS (81 aa). Over residues 9–28 the composition is skewed to polar residues; it reads VPATEQELPQPQAETGSGTE. The span at 29 to 42 shows a compositional bias: acidic residues; the sequence is SDSDESVPELEEQD. Residue S43 is modified to Phosphoserine; by ILK1. Residues 44-57 show a composition bias toward low complexity; the sequence is TQTATQQAQLAAAA. Positions 69–80 are required for DNA-binding; the sequence is QSRSEKKARKAM. In terms of domain architecture, NAC-A/B spans 70-135; that stretch reads SRSEKKARKA…AKIEDLSQQA (66 aa). Residues 93–108 form an RNA/DNA-binding region; sequence RVTIRKSKNILFVITK. S132 is modified (phosphoserine). K142 bears the N6-acetyllysine; alternate mark. K142 is covalently cross-linked (Glycyl lysine isopeptide (Lys-Gly) (interchain with G-Cter in SUMO2); alternate). T159 is subject to Phosphothreonine; by GSK3-beta. A Phosphothreonine modification is found at T161. A phosphoserine mark is found at S166, S186, S191, and S203. One can recognise a UBA domain in the interval 176-213; sequence VEVKDIELVMSQANVSRAKAVRALKNNSNDIVNAIMEL.

The protein belongs to the NAC-alpha family. In terms of assembly, part of the nascent polypeptide-associated complex (NAC), which is a heterodimer of NACA and BTF3 (via NAC-A/B domains). NAC associates with ribosomes through the BTF3/NACB subunit and contacts the ribosomal protein L23, which is positioned near the exiting site. Both subunits can contact nascent polypeptide chains. NACA may also form homodimers, and only this form binds DNA. Interacts with TBP and JUN. Phosphorylation of Ser-43 by ILK during cell adhesion may promote nuclear localization. Phosphorylation of Thr-159 by GSK3B may promote proteasome mediated degradation. In terms of tissue distribution, isoform 1 appears to be ubiquitously expressed.

It localises to the cytoplasm. Its subcellular location is the nucleus. In terms of biological role, prevents inappropriate targeting of non-secretory polypeptides to the endoplasmic reticulum (ER). Binds to nascent polypeptide chains as they emerge from the ribosome and blocks their interaction with the signal recognition particle (SRP), which normally targets nascent secretory peptides to the ER. Also reduces the inherent affinity of ribosomes for protein translocation sites in the ER membrane (M sites). Isoform 1 and isoform 2 appear to bind DNA and play roles in transcription. Isoform 1 may function as a specific coactivator for JUN, acting to stabilize the interaction of JUN homodimers with promoter elements. In Mus musculus (Mouse), this protein is Nascent polypeptide-associated complex subunit alpha (Naca).